Here is a 218-residue protein sequence, read N- to C-terminus: Peptidyl-tRNA hydrolase (218 aa).

Residue Y19 coordinates tRNA. The active-site Proton acceptor is the H24. Residues Y68, N70, and N116 each coordinate tRNA. The interval 181–218 (WNTATQRLNARPAPPKPPKAPKAPQPAAADQPKDESQP) is disordered. The span at 192-204 (PAPPKPPKAPKAP) shows a compositional bias: pro residues.

Belongs to the PTH family. Monomer.

Its subcellular location is the cytoplasm. The catalysed reaction is an N-acyl-L-alpha-aminoacyl-tRNA + H2O = an N-acyl-L-amino acid + a tRNA + H(+). Hydrolyzes ribosome-free peptidyl-tRNAs (with 1 or more amino acids incorporated), which drop off the ribosome during protein synthesis, or as a result of ribosome stalling. Its function is as follows. Catalyzes the release of premature peptidyl moieties from peptidyl-tRNA molecules trapped in stalled 50S ribosomal subunits, and thus maintains levels of free tRNAs and 50S ribosomes. This is Peptidyl-tRNA hydrolase from Azoarcus sp. (strain BH72).